A 285-amino-acid chain; its full sequence is Dermonecrotic toxin LlSicTox-alphaIII1ii (285 aa).

The active site involves His12. Mg(2+) is bound by residues Glu32 and Asp34. The active-site Nucleophile is the His47. The cysteines at positions 51 and 57 are disulfide-linked. Position 91 (Asp91) interacts with Mg(2+).

The protein belongs to the arthropod phospholipase D family. Class I subfamily. Requires Mg(2+) as cofactor. Expressed by the venom gland.

The protein localises to the secreted. The enzyme catalyses an N-(acyl)-sphingosylphosphocholine = an N-(acyl)-sphingosyl-1,3-cyclic phosphate + choline. It catalyses the reaction an N-(acyl)-sphingosylphosphoethanolamine = an N-(acyl)-sphingosyl-1,3-cyclic phosphate + ethanolamine. It carries out the reaction a 1-acyl-sn-glycero-3-phosphocholine = a 1-acyl-sn-glycero-2,3-cyclic phosphate + choline. The catalysed reaction is a 1-acyl-sn-glycero-3-phosphoethanolamine = a 1-acyl-sn-glycero-2,3-cyclic phosphate + ethanolamine. Its function is as follows. Dermonecrotic toxins cleave the phosphodiester linkage between the phosphate and headgroup of certain phospholipids (sphingolipid and lysolipid substrates), forming an alcohol (often choline) and a cyclic phosphate. This toxin acts on sphingomyelin (SM) with high activity (56.8 U/mg). It may also act on ceramide phosphoethanolamine (CPE), lysophosphatidylcholine (LPC) and lysophosphatidylethanolamine (LPE), but not on lysophosphatidylserine (LPS), and lysophosphatidylglycerol (LPG). It acts by transphosphatidylation, releasing exclusively cyclic phosphate products as second products. Induces dermonecrosis, hemolysis, increased vascular permeability, edema, inflammatory response, and platelet aggregation. Is lethal to mice. The protein is Dermonecrotic toxin LlSicTox-alphaIII1ii of Loxosceles laeta (South American recluse spider).